The sequence spans 209 residues: C-type lectin domain family 6 member A (209 aa).

The Cytoplasmic portion of the chain corresponds to 1-20 (MMQEQQPQSTEKRGWLSLRL). Residues 21–41 (WSVAGISIALLSACFIVSCVV) traverse the membrane as a helical; Signal-anchor for type II membrane protein segment. Topologically, residues 42–209 (TYHFTYGETG…SICEMNKIYL (168 aa)) are extracellular. 4 disulfide bridges follow: Cys-66–Cys-78, Cys-79–Cys-90, Cys-107–Cys-202, and Cys-176–Cys-194. A C-type lectin domain is found at 86–203 (FGSSCYFISS…CETRRNSICE (118 aa)). Residues Val-116, Asn-118, and Glu-122 each contribute to the Ca(2+) site. Asn-131 is a glycosylation site (N-linked (GlcNAc...) asparagine). Residues Glu-168, Asn-170, and Glu-174 each contribute to the Ca(2+) site. Residues 168-170 (EPN), Glu-174, Trp-182, 190-191 (ND), and Arg-198 contribute to the alpha-D-mannopyranose site. An N-linked (GlcNAc...) asparagine glycan is attached at Asn-170. Ca(2+) is bound by residues Asn-190 and Asp-191. Residue Glu-203 participates in Ca(2+) binding.

As to quaternary structure, associated with FCER1G. Heterodimer with CLEC4D; this heterodimer forms a pattern recognition receptor (PRR) against fungal infection. As to expression, expressed in lung, spleen, lymph node, leukocytes, bone marrow, tonsils and dendritic cells. Strongly expressed in purified monocytes and weakly in B-cells. In peripheral blood cells, preferentially expressed in plasmacytoids rather than myeloids.

The protein resides in the cell membrane. In terms of biological role, calcium-dependent lectin that acts as a pattern recognition receptor (PRR) of the innate immune system: specifically recognizes and binds alpha-mannans on C.albicans hypheas. Binding of C.albicans alpha-mannans to this receptor complex leads to phosphorylation of the immunoreceptor tyrosine-based activation motif (ITAM) of FCER1G, triggering activation of SYK, CARD9 and NF-kappa-B, consequently driving maturation of antigen-presenting cells and shaping antigen-specific priming of T-cells toward effector T-helper 1 and T-helper 17 cell subtypes. Recognizes also, in a mannose-dependent manner, allergens from house dust mite and fungi, by promoting cysteinyl leukotriene production. Recognizes soluble elements from the eggs of Shistosoma mansoni altering adaptive immune responses. This chain is C-type lectin domain family 6 member A, found in Homo sapiens (Human).